Here is a 167-residue protein sequence, read N- to C-terminus: UPF0114 protein Tola_1474 (167 aa).

Helical transmembrane passes span 15-35 (IMAP…IKFF), 53-73 (LILI…IVMV), 109-129 (VAAS…MNTE), and 136-156 (IKWY…MGYL).

Belongs to the UPF0114 family.

The protein localises to the cell membrane. In Tolumonas auensis (strain DSM 9187 / NBRC 110442 / TA 4), this protein is UPF0114 protein Tola_1474.